The sequence spans 300 residues: Peroxisomal 2,4-dienoyl-CoA reductase [(3E)-enoyl-CoA-producing] (300 aa).

NADP(+)-binding positions include 42-47 (GGGSGI), 67-71 (RNLEK), and D93. A substrate-binding site is contributed by R67. Residues R95, F125, and 133 to 135 (SFN) each bind substrate. Residues K189 and 215-221 (PGPISGT) each bind NADP(+). Residue R226 participates in substrate binding. The short motif at 298–300 (AKL) is the Microbody targeting signal element.

It belongs to the short-chain dehydrogenases/reductases (SDR) family. 2,4-dienoyl-CoA reductase subfamily. In terms of assembly, monomer, dimer and oligomer.

It localises to the peroxisome. The catalysed reaction is a (2E,4Z)-dienoyl-CoA + NADPH + H(+) = a 4,5-saturated-(3E)-enoyl-CoA + NADP(+). It carries out the reaction a (2E,4E)-dienoyl-CoA + NADPH + H(+) = a 4,5-saturated-(3E)-enoyl-CoA + NADP(+). It catalyses the reaction (2E,4E)-hexadienoyl-CoA + NADPH + H(+) = (3E)-hexenoyl-CoA + NADP(+). The enzyme catalyses (2E,4E)-decadienoyl-CoA + NADPH + H(+) = (3E)-decenoyl-CoA + NADP(+). The catalysed reaction is (2E,4Z,7Z,10Z,13Z,16Z,19Z)-docosaheptaenoyl-CoA + NADPH + H(+) = (3E,7Z,10Z,13Z,16Z,19Z)-docosahexaenoyl-CoA + NADP(+). Auxiliary enzyme of beta-oxidation. Participates in the degradation of unsaturated fatty enoyl-CoA esters having double bonds in both even- and odd-numbered positions in peroxisome. Catalyzes the NADP-dependent reduction of 2,4-dienoyl-CoA to yield trans-3-enoyl-CoA. The protein is Peroxisomal 2,4-dienoyl-CoA reductase [(3E)-enoyl-CoA-producing] (decr2) of Danio rerio (Zebrafish).